The chain runs to 531 residues: PHD finger protein 21B (531 aa).

4 disordered regions span residues 79–99 (PDSL…PTFQ), 184–222 (SADN…SLSP), 238–277 (VQTQ…ENPE), and 295–314 (EIQS…PAYS). The segment covering 265-277 (KKEDRPPTQENPE) has biased composition (basic and acidic residues). The segment at 352–399 (DEHCAACKRGANLQPCGTCPGAYHLSCLEPPLKTAPKGVWVCPRCQQK) adopts a PHD-type zinc-finger fold. A coiled-coil region spans residues 423 to 465 (KTVKEEEKQKLLQRGSELQNEHQQLEERDRRLASAVQKCLELK). Residues 507–531 (LLAGPWTKPSVAATHPTVQHPQGHN) form a disordered region. Residues 522 to 531 (PTVQHPQGHN) show a composition bias toward polar residues.

This is PHD finger protein 21B (PHF21B) from Homo sapiens (Human).